We begin with the raw amino-acid sequence, 463 residues long: Retinoic acid receptor RXR-gamma (463 aa).

A modulating region spans residues 1–138 (MYGNYSHFMK…TSPGSLVKHI (138 aa)). Positions 16 to 53 (GGSPGHTGSTSMSPSVALPTGKPMDSHPSYTDTPVSAP) are disordered. 2 NR C4-type zinc fingers span residues 139-159 (CAICGDRSSGKHYGVYSCEGC) and 175-199 (CRDNKDCLIDKRQRNRCQYCRYQKC). Residues 139–204 (CAICGDRSSG…RYQKCLVMGM (66 aa)) constitute a DNA-binding region (nuclear receptor). A hinge region spans residues 205–230 (KREAVQEERQRSRERAESEAECASTG). The NR LBD domain maps to 231–459 (HEDMPVERIL…TFLMEMLETP (229 aa)).

It belongs to the nuclear hormone receptor family. NR2 subfamily. As to quaternary structure, homodimer. Heterodimer with a RAR molecule. Binds DNA preferentially as a RAR/RXR heterodimer. Interacts with RARA. In terms of processing, acetylated by EP300. As to expression, expressed in the liver, but not detected in the adrenal gland (at protein level). Restricted expression in adrenal gland, kidney, liver, brain and lungs. Strong expression in heart and muscles.

Its subcellular location is the nucleus. The protein resides in the cytoplasm. Functionally, receptor for retinoic acid. Retinoic acid receptors bind as heterodimers to their target response elements in response to their ligands, all-trans or 9-cis retinoic acid, and regulate gene expression in various biological processes. The RAR/RXR heterodimers bind to the retinoic acid response elements (RARE) composed of tandem 5'-AGGTCA-3' sites known as DR1-DR5. The high affinity ligand for RXRs is 9-cis retinoic acid. This Rattus norvegicus (Rat) protein is Retinoic acid receptor RXR-gamma (Rxrg).